A 111-amino-acid polypeptide reads, in one-letter code: Ribonuclease P protein component (111 aa).

Belongs to the RnpA family. In terms of assembly, consists of a catalytic RNA component (M1 or rnpB) and a protein subunit.

It carries out the reaction Endonucleolytic cleavage of RNA, removing 5'-extranucleotides from tRNA precursor.. Functionally, RNaseP catalyzes the removal of the 5'-leader sequence from pre-tRNA to produce the mature 5'-terminus. It can also cleave other RNA substrates such as 4.5S RNA. The protein component plays an auxiliary but essential role in vivo by binding to the 5'-leader sequence and broadening the substrate specificity of the ribozyme. This is Ribonuclease P protein component from Fusobacterium nucleatum subsp. nucleatum (strain ATCC 25586 / DSM 15643 / BCRC 10681 / CIP 101130 / JCM 8532 / KCTC 2640 / LMG 13131 / VPI 4355).